The chain runs to 101 residues: Protein RnfH (101 aa).

This sequence belongs to the UPF0125 (RnfH) family.

The chain is Protein RnfH from Coxiella burnetii (strain CbuG_Q212) (Coxiella burnetii (strain Q212)).